The chain runs to 158 residues: MQNIKVNRGAILRSVEQAHIKQDHPDFQPGDTVRVETKVVEGNRTRNQAFEGVVIAINGTGSRKSFTVRKISFGEGVERVFPFSSPLVAKVTVLERGKVRRAKLYYLRELRGKAARIKSDRSRVMKDAARAQQARDAAQGNSSSETQSSTAAVETQGE.

A compositionally biased stretch (basic and acidic residues) spans Ser-119–Ala-129. Residues Ser-119 to Glu-158 are disordered. Low complexity predominate over residues Arg-130 to Gln-139. Residues Gly-140–Glu-158 are compositionally biased toward polar residues.

This sequence belongs to the bacterial ribosomal protein bL19 family.

In terms of biological role, this protein is located at the 30S-50S ribosomal subunit interface and may play a role in the structure and function of the aminoacyl-tRNA binding site. In Deinococcus geothermalis (strain DSM 11300 / CIP 105573 / AG-3a), this protein is Large ribosomal subunit protein bL19.